Here is a 110-residue protein sequence, read N- to C-terminus: Insulin growth factor-like family member 1 (110 aa).

The signal sequence occupies residues 1 to 24; it reads MAPRGCIVAVFAIFCISRLLCSHG. N-linked (GlcNAc...) asparagine glycosylation occurs at Asn-71.

Belongs to the IGFL family. As to quaternary structure, homodimer; disulfide-linked. In terms of tissue distribution, detected in ovary and spinal cord.

The protein localises to the secreted. Its function is as follows. Probable ligand of the IGFLR1 cell membrane receptor. The polypeptide is Insulin growth factor-like family member 1 (IGFL1) (Homo sapiens (Human)).